We begin with the raw amino-acid sequence, 115 residues long: Waprin-like protein (115 aa).

Residues 1–21 (MNRSLLAFAIVLVLLVAGTSS) form the signal peptide. Positions 23–69 (LFNKSGNCPMRNTVTSCTPRCIGDGECSSNQKCCPNKCGTTSCANSS) constitute a WAP domain. 4 disulfide bridges follow: Cys30/Cys56, Cys39/Cys60, Cys43/Cys55, and Cys49/Cys65.

Belongs to the venom waprin family. Cys-rich waprin subfamily. As to expression, expressed by the venom gland.

The protein localises to the secreted. Antimicrobial peptides with activity against Gram-positive and Gram-negative bacteria as well as fungi. Recognizes carbohydrates in the microbial cell walls, and induces structural damage to them. Also inhibits microbial serine proteases, as well as mammalian elastases. Carbohydrates that are recognized are LPS, mannan, peptidoglycan, and N-acetl-D-glucosamine. In Tetramorium bicarinatum (Tramp ant), this protein is Waprin-like protein.